A 413-amino-acid polypeptide reads, in one-letter code: Docking protein 2 (413 aa).

A PH domain is found at 4–114 (VVVKQGFLYL…WIQAICLLAF (111 aa)). In terms of domain architecture, IRS-type PTB spans 147–252 (PQKEFAVTVR…SAQKNAAPPG (106 aa)). Residues 247–292 (NAAPPGPQTQPVPVPAVLPRPESPYARPHDSLPPPSPTVPVPTPRQ) form a disordered region. Positions 250-268 (PPGPQTQPVPVPAVLPRPE) are enriched in pro residues. Tyr271 is subject to Phosphotyrosine. Over residues 277–289 (SLPPPSPTVPVPT) the composition is skewed to pro residues. Phosphotyrosine is present on residues Tyr300 and Tyr346. Residues 362 to 381 (QEPRGEAWRRQATADRDSSG) are compositionally biased toward basic and acidic residues. The interval 362–383 (QEPRGEAWRRQATADRDSSGLK) is disordered.

Belongs to the DOK family. Type A subfamily. Interacts with phosphorylated RASGAP and EGFR. Interacts with RET and NCK. Interacts (via PH domain) with TEK/TIE2 (tyrosine phosphorylated). On immunoreceptor stimulation, phosphorylated on C-terminal tyrosine residues. Phosphorylation on Tyr-346 is required for binding to the SH2 domain of NCK. Phosphorylation on both Tyr-271 and Tyr-300 is required for interaction with RASGAP. Phosphorylated on tyrosine residues by TEK/TIE2.

Its function is as follows. DOK proteins are enzymatically inert adaptor or scaffolding proteins. They provide a docking platform for the assembly of multimolecular signaling complexes. DOK2 may modulate the cellular proliferation induced by IL-4, as well as IL-2 and IL-3. May be involved in modulating Bcr-Abl signaling. Attenuates EGF-stimulated MAP kinase activation. The polypeptide is Docking protein 2 (DOK2) (Bos taurus (Bovine)).